We begin with the raw amino-acid sequence, 481 residues long: Argininosuccinate lyase (481 aa).

The protein belongs to the lyase 1 family. Argininosuccinate lyase subfamily.

The protein resides in the cytoplasm. The enzyme catalyses 2-(N(omega)-L-arginino)succinate = fumarate + L-arginine. The protein operates within amino-acid biosynthesis; L-arginine biosynthesis; L-arginine from L-ornithine and carbamoyl phosphate: step 3/3. In Methanococcus maripaludis (strain C5 / ATCC BAA-1333), this protein is Argininosuccinate lyase.